We begin with the raw amino-acid sequence, 381 residues long: NF-kappa-B inhibitor-like protein 1 (381 aa).

The interval 1-34 (MSNPSPQVPEEEASTSVCRPKSSMASTSRRQRRE) is disordered. ANK repeat units follow at residues 64–93 (GQPP…DPAH) and 97–130 (HGDT…AMGI). Disordered regions lie at residues 129-167 (GIKN…EWRQ) and 186-294 (GDAS…RGSL). Ser-150 carries the post-translational modification Phosphoserine. Positions 150–159 (SAEEEEEDDA) are enriched in acidic residues. Composition is skewed to basic and acidic residues over residues 218–228 (REAEGSRRPPR) and 238–287 (QQEE…EHPR).

In terms of assembly, interacts with CACTIN (via N-terminal domain); the interaction occurs in a proinflammatory-independent manner. Detected in different cell types including monocytes, T-cells, B-cells and hepatocytes.

It localises to the nucleus. In terms of biological role, involved in the regulation of innate immune response. Acts as negative regulator of Toll-like receptor and interferon-regulatory factor (IRF) signaling pathways. Contributes to the negative regulation of transcriptional activation of NF-kappa-B target genes in response to endogenous proinflammatory stimuli. The chain is NF-kappa-B inhibitor-like protein 1 (NFKBIL1) from Homo sapiens (Human).